Here is a 175-residue protein sequence, read N- to C-terminus: Regenerating islet-derived protein 3-gamma (175 aa).

Residues 1–26 form the signal peptide; it reads MLPPMALPSVSWMLLSCLILLCQVQG. A propeptide spanning residues 27-37 is cleaved from the precursor; the sequence is EETQKELPSPR. Disulfide bonds link C40/C51, C68/C171, and C146/C163. The 126-residue stretch at 47–172 folds into the C-type lectin domain; sequence YGSPCYALFL…CDAKLPYVCK (126 aa). The sufficient to activate EXTL3 stretch occupies residues 103–118; it reads WIGLHDPTQGSEPDGD. Residue H107 participates in Zn(2+) binding. The EPN motif lies at 114–116; it reads EPD. Positions 121 and 145 each coordinate Zn(2+).

As to quaternary structure, forms a hexameric membrane-permeabilizing oligomeric pore on membrane phospholipids. The hexamer is formed by three dimers related by helical symmetry. Forms filaments, filamentation traps pore complexes and limits damage to host cells. Interacts with EXTL3. In terms of processing, proteolytic processing by trypsin removes an inhibitory N-terminal propeptide and is essential for peptidoglycan binding and antibacterial activity. Predominantly expressed in pancreas, where it may be restricted to exocrine pancreas. Moderate expression levels in testis and weak in heart, kidney and placenta.

Its subcellular location is the secreted. It is found in the cytoplasm. Its activity is regulated as follows. Lipopolysaccharide inhibits pore-forming activity, explaining why is bactericidal for Gram-positive but not Gram-negative bacteria. Bactericidal C-type lectin which acts exclusively against Gram-positive bacteria and mediates bacterial killing by binding to surface-exposed carbohydrate moieties of peptidoglycan. Restricts bacterial colonization of the intestinal epithelial surface and consequently limits activation of adaptive immune responses by the microbiota. Its function is as follows. Acts as a hormone in response to different stimuli like anti-inflammatory signals, such as IL17A, or gut microbiome. Is secreted by different cell types to activate its receptor EXTL3 and induce cell specific signaling pathways. Induced by IL17A in keratinocytes, regulates keratinocyte proliferation and differentiation after skin injury. In parallel, inhibits skin inflammation through the inhibition of inflammatory cytokines such as IL6 and TNF. Induced by IL22 in lung epithelial cells, inhibits cytokine production and regulates allergic airway inflammation. Induced in small intestine by inulin-enriched diet and Lactobacillus gasseri enriched microbiome, plays a role in the improvement of gut barrier function, the regulation of energy balance and glucose levels. Modulates microbiota composition in duodenal contents. Produced by nociceptor in response to endotoxins, prevents endotoxic death by targeting kynurenine pathway in microglia. In terms of biological role, has bacteriostatic activity. Functionally, has bactericidal activity against L.monocytogenes and methicillin-resistant S.aureus. The protein is Regenerating islet-derived protein 3-gamma of Homo sapiens (Human).